A 68-amino-acid chain; its full sequence is Conotoxin Vx2 (68 aa).

Residues 1–20 form the signal peptide; it reads MMSKLGVLVTICLLLFPLTA. A propeptide spanning residues 21–47 is cleaved from the precursor; it reads LPLDGDQPADHPAKRTQDHNLASPISA. 3 cysteine pairs are disulfide-bonded: Cys55/Cys68, Cys56/Cys61, and Cys57/Cys65.

Belongs to the conotoxin M superfamily. As to expression, expressed by the venom duct.

The protein localises to the secreted. In vivo, elicits a series of symptoms, such as being sedative, tail stiffening and twisted jumping, when injected intracranially into mice. The polypeptide is Conotoxin Vx2 (Conus vexillum (Flag cone)).